A 632-amino-acid polypeptide reads, in one-letter code: Cyclic GMP-AMP synthase-like receptor 2 (632 aa).

Residues D71, D73, and D181 each contribute to the Mg(2+) site. Mn(2+) is bound at residue D295.

It belongs to the mab-21 family. Mg(2+) serves as cofactor. It depends on Mn(2+) as a cofactor.

Nucleotidyltransferase that catalyzes the formation of some cyclic nucleotide and plays a key role in innate immunity. Directly binds some unknown ligand, activating the nucleotidyltransferase activity, leading to synthesis of a second messenger that binds to and activates Sting, thereby triggering the immune response via activation of the NF-kappa-B transcription factor. The polypeptide is Cyclic GMP-AMP synthase-like receptor 2 (Crassostrea virginica (Eastern oyster)).